The primary structure comprises 339 residues: Deubiquitinase and deneddylase Dub2 (339 aa).

Residues 36–56 traverse the membrane as a helical segment; it reads IIIALFLIVISCGLILCAYTF. Catalysis depends on residues His203, Asp220, and Cys282.

The protein belongs to the peptidase C48 family.

It localises to the secreted. The protein localises to the host cell. Its subcellular location is the membrane. Functionally, effector proteins function to alter host cell physiology and promote bacterial survival in host tissues. This protease possesses deubiquitinating and deneddylating activities. This Chlamydia trachomatis serovar L2 (strain ATCC VR-902B / DSM 19102 / 434/Bu) protein is Deubiquitinase and deneddylase Dub2 (cdu2).